Reading from the N-terminus, the 1164-residue chain is MLDVSNFERMRIGLASPEQIRAWSSGEVKKPETINYRTLKPERDGLFCERIFGPTKDWECHCGKYKRVRYKGIVCDRCGVEVTRAKVRRERMGHIELAAPVSHIWYFKGIPSRMGLILDMSPRSLEKVLYFVAYVVIDPGDTPLVKKQLLTEAEYREYRDKYGNAFRAAMGAEAIKELLQEIDLDQLAAELRQELKESSGQRKIRALRRLEVVEAFRSSGNRPEWMIMDVIPVIPPELRPMVQLDGGRFATSDLNDLYRRVINRNNRLKRLLDLGAPDIIVRNEKRMLQEAVDALIDNGRRGRPVTGPGNRPLKSLSDMLKGKQGRFRQNLLGKRVDYSGRSVIVVGPELKMHQCGLPKEMALELFKPFVMKRLVDKGLAHNIKSAKRMVERVKNEVWDVLEEVISEHPVLLNRAPTLHRLGIQAFEPVLVEGRAIQIHPLVCTAYNADFDGDQMAVHVPLSAEAQAEARLLMMAAHHILNPKDGRPVVSPTQDMVLGAYYLTTVSKGARGEGKAFSSYDEAYMAYLNKVIDMHAMIKVRQEDGQLLETTIGRLIFNREIPIPKELGYYNCEVDKKKLTEIIARCYQLLGTEATATLLDGIKKVGFHYSTLAGFTIGIDDIVVPGDKKEIIAETESAVEKIDQQYRKGLISEEERYQKVISLWNNATDTLTKKLMAGMDKFNPVFMMANSGARGNVQQIRQLAGMRGLMADPSGRIIDLPIKANFREGLTVLEYFISTHGARKGLADTALRTADSGYLTRRLVDVAQDVIVREDDCGTTAGIEVREIQEGNQVIEKMEERLAGRYALEDVRHPETGELLVAANTMIDDDAARAIVQAGIKTVKIRSVLTCKTRYGVCRKCYGRDLATGREVEIGEAVGIIAAQSIGEPGTQLTMRTFHTGGVAGDDITQGLSRVEELFEARKPKGQAIIAETTGTITAITEVRGRREIEITDDSGEKFSYQVPYGSRLKVAEGDHVEAGDELTGGSVNPHDLLKVKGVRGVQLYLLREVQRVYRLQGVDINDKHIEVMIRQMLRKVKVEDQGDTDLLPGSLVDAFDFEDANRKVQEIGGKPATARPVLLGITKASLATDSFLSAASFQETTRVLTEAAIKGRVDPLLGLKENVIIGKLIPAGTGMSRYRQLKLVTPAVDQEEDGAEAVDMATGK.

Zn(2+) contacts are provided by cysteine 60, cysteine 62, cysteine 75, and cysteine 78. The Mg(2+) site is built by aspartate 449, aspartate 451, and aspartate 453. 4 residues coordinate Zn(2+): cysteine 776, cysteine 850, cysteine 857, and cysteine 860.

It belongs to the RNA polymerase beta' chain family. As to quaternary structure, the RNAP catalytic core consists of 2 alpha, 1 beta, 1 beta' and 1 omega subunit. When a sigma factor is associated with the core the holoenzyme is formed, which can initiate transcription. Mg(2+) is required as a cofactor. The cofactor is Zn(2+).

The catalysed reaction is RNA(n) + a ribonucleoside 5'-triphosphate = RNA(n+1) + diphosphate. In terms of biological role, DNA-dependent RNA polymerase catalyzes the transcription of DNA into RNA using the four ribonucleoside triphosphates as substrates. The sequence is that of DNA-directed RNA polymerase subunit beta' from Moorella thermoacetica (strain ATCC 39073 / JCM 9320).